The following is a 622-amino-acid chain: Low affinity potassium transport system protein Kup (622 aa).

The next 12 membrane-spanning stretches (helical) occupy residues 9–29 (LPAI…TSPL), 49–69 (VFGF…IKYL), 103–123 (VIMG…TPAI), 137–157 (PQLD…LFMI), 165–185 (VGKL…GLGL), 213–233 (VSFI…VLYA), 247–267 (WFTV…ALLL), 276–296 (PFFL…AALA), 337–357 (IYIP…IVSF), 363–383 (LAAA…ILST), 396–416 (FVAL…TANL), and 419–439 (LLSG…VMTT).

Belongs to the HAK/KUP transporter (TC 2.A.72) family.

It localises to the cell inner membrane. The catalysed reaction is K(+)(in) + H(+)(in) = K(+)(out) + H(+)(out). Functionally, responsible for the low-affinity transport of potassium into the cell. Likely operates as a K(+):H(+) symporter. This chain is Low affinity potassium transport system protein Kup, found in Shigella flexneri.